The sequence spans 636 residues: Threonine--tRNA ligase (636 aa).

The TGS domain occupies 1–63; the sequence is MSSISIALPD…KDDSRVEIIT (63 aa). A catalytic region spans residues 243–534; it reads DHRRLGRELD…LIEHYAGNFP (292 aa). 3 residues coordinate Zn(2+): cysteine 335, histidine 386, and histidine 511.

Belongs to the class-II aminoacyl-tRNA synthetase family. As to quaternary structure, homodimer. Zn(2+) serves as cofactor.

It is found in the cytoplasm. It carries out the reaction tRNA(Thr) + L-threonine + ATP = L-threonyl-tRNA(Thr) + AMP + diphosphate + H(+). In terms of biological role, catalyzes the attachment of threonine to tRNA(Thr) in a two-step reaction: L-threonine is first activated by ATP to form Thr-AMP and then transferred to the acceptor end of tRNA(Thr). Also edits incorrectly charged L-seryl-tRNA(Thr). The sequence is that of Threonine--tRNA ligase from Pelobacter propionicus (strain DSM 2379 / NBRC 103807 / OttBd1).